We begin with the raw amino-acid sequence, 581 residues long: Membrane protein insertase YidC (581 aa).

Residues 7–27 (ILIVALAVVSYLMVLQWNEDY) traverse the membrane as a helical segment. Residues 41 to 62 (AATPALPDTPADTASTGGDDIP) are disordered. Transmembrane regions (helical) follow at residues 365 to 385 (TVDYGFLWFLAQPIFWLLEVI), 388 to 408 (LLGNWGWSIIVLTIIIKLIFF), 458 to 478 (LGGCLPILVQMPVFLALYWVL), 489 to 509 (WMFWITDLSIKDPFFILPIIM), and 536 to 556 (PIIFTFFFLWFPAGLVLYWVV).

The protein belongs to the OXA1/ALB3/YidC family. Type 1 subfamily. In terms of assembly, interacts with the Sec translocase complex via SecD. Specifically interacts with transmembrane segments of nascent integral membrane proteins during membrane integration.

Its subcellular location is the cell inner membrane. In terms of biological role, required for the insertion and/or proper folding and/or complex formation of integral membrane proteins into the membrane. Involved in integration of membrane proteins that insert both dependently and independently of the Sec translocase complex, as well as at least some lipoproteins. Aids folding of multispanning membrane proteins. The polypeptide is Membrane protein insertase YidC (Ectopseudomonas mendocina (strain ymp) (Pseudomonas mendocina)).